The following is a 359-amino-acid chain: Molybdenum import ATP-binding protein ModC (359 aa).

In terms of domain architecture, ABC transporter spans 1-236; the sequence is MNTEIKARFR…IDLPAAFADD (236 aa). Residue 34-41 coordinates ATP; that stretch reads GHSGSGKT. The region spanning 294–359 is the Mop domain; that stretch reads QSSILNCVSA…AQIKAVALLA (66 aa).

The protein belongs to the ABC transporter superfamily. Molybdate importer (TC 3.A.1.8) family. As to quaternary structure, the complex is composed of two ATP-binding proteins (ModC), two transmembrane proteins (ModB) and a solute-binding protein (ModA).

The protein resides in the cell inner membrane. It carries out the reaction molybdate(out) + ATP + H2O = molybdate(in) + ADP + phosphate + H(+). Functionally, part of the ABC transporter complex ModABC involved in molybdenum import. Responsible for energy coupling to the transport system. The chain is Molybdenum import ATP-binding protein ModC from Dechloromonas aromatica (strain RCB).